Here is a 160-residue protein sequence, read N- to C-terminus: Ribosome maturation factor RimP (160 aa).

Belongs to the RimP family.

The protein localises to the cytoplasm. Functionally, required for maturation of 30S ribosomal subunits. The sequence is that of Ribosome maturation factor RimP from Citrifermentans bemidjiense (strain ATCC BAA-1014 / DSM 16622 / JCM 12645 / Bem) (Geobacter bemidjiensis).